The sequence spans 283 residues: Isochorismatase domain-containing protein 1 (283 aa).

The protein belongs to the isochorismatase family.

The sequence is that of Isochorismatase domain-containing protein 1 (isoc1) from Danio rerio (Zebrafish).